A 218-amino-acid polypeptide reads, in one-letter code: Guanylate kinase (218 aa).

A Guanylate kinase-like domain is found at 14 to 193; that stretch reads GVMLVLSSPS…AFASVRAIVS (180 aa). 21 to 28 lines the ATP pocket; that stretch reads SPSGAGKS.

This sequence belongs to the guanylate kinase family.

It is found in the cytoplasm. The catalysed reaction is GMP + ATP = GDP + ADP. In terms of biological role, essential for recycling GMP and indirectly, cGMP. The chain is Guanylate kinase from Chelativorans sp. (strain BNC1).